The primary structure comprises 636 residues: Chaperone protein HtpG (636 aa).

Residues 1–342 (MSGETLEFQA…AHDLSLNISR (342 aa)) are a; substrate-binding. The b stretch occupies residues 343–558 (ELLQQDRQIQ…AHDVTPTLEK (216 aa)). Positions 559–636 (MYRAMGHEVP…ILAERLARTL (78 aa)) are c.

The protein belongs to the heat shock protein 90 family. Homodimer.

Its subcellular location is the cytoplasm. Functionally, molecular chaperone. Has ATPase activity. In Salinispora arenicola (strain CNS-205), this protein is Chaperone protein HtpG.